The primary structure comprises 785 residues: Endonuclease MutS2 (785 aa).

An ATP-binding site is contributed by 334–341 (GPNTGGKT). Positions 710-785 (LDLRGKRYEE…GNGATIVHFK (76 aa)) constitute a Smr domain.

The protein belongs to the DNA mismatch repair MutS family. MutS2 subfamily. As to quaternary structure, homodimer. Binds to stalled ribosomes, contacting rRNA.

In terms of biological role, endonuclease that is involved in the suppression of homologous recombination and thus may have a key role in the control of bacterial genetic diversity. Its function is as follows. Acts as a ribosome collision sensor, splitting the ribosome into its 2 subunits. Detects stalled/collided 70S ribosomes which it binds and splits by an ATP-hydrolysis driven conformational change. Acts upstream of the ribosome quality control system (RQC), a ribosome-associated complex that mediates the extraction of incompletely synthesized nascent chains from stalled ribosomes and their subsequent degradation. Probably generates substrates for RQC. The protein is Endonuclease MutS2 of Pediococcus pentosaceus (strain ATCC 25745 / CCUG 21536 / LMG 10740 / 183-1w).